The sequence spans 342 residues: D-erythrose-4-phosphate dehydrogenase (342 aa).

12–13 (RI) is a binding site for NAD(+). Substrate-binding positions include 154–156 (SCT), Arg200, 213–214 (TK), and Arg236. The active-site Nucleophile is Cys155. Residue Asn318 participates in NAD(+) binding.

This sequence belongs to the glyceraldehyde-3-phosphate dehydrogenase family. Epd subfamily. As to quaternary structure, homotetramer.

The protein resides in the cytoplasm. The enzyme catalyses D-erythrose 4-phosphate + NAD(+) + H2O = 4-phospho-D-erythronate + NADH + 2 H(+). Its pathway is cofactor biosynthesis; pyridoxine 5'-phosphate biosynthesis; pyridoxine 5'-phosphate from D-erythrose 4-phosphate: step 1/5. Functionally, catalyzes the NAD-dependent conversion of D-erythrose 4-phosphate to 4-phosphoerythronate. This Klebsiella pneumoniae subsp. pneumoniae (strain ATCC 700721 / MGH 78578) protein is D-erythrose-4-phosphate dehydrogenase.